A 517-amino-acid chain; its full sequence is ATP synthase subunit beta (517 aa).

2 stretches are compositionally biased toward low complexity: residues 1–22 (MAKA…AAKA) and 29–42 (AKTA…APKA). Residues 1–42 (MAKAATPKTTAAAEAKPAAAKAPAKKAPAKTAAAKSDAAPKA) are disordered. 195 to 202 (GGAGVGKT) contacts ATP.

The protein belongs to the ATPase alpha/beta chains family. As to quaternary structure, F-type ATPases have 2 components, CF(1) - the catalytic core - and CF(0) - the membrane proton channel. CF(1) has five subunits: alpha(3), beta(3), gamma(1), delta(1), epsilon(1). CF(0) has three main subunits: a(1), b(2) and c(9-12). The alpha and beta chains form an alternating ring which encloses part of the gamma chain. CF(1) is attached to CF(0) by a central stalk formed by the gamma and epsilon chains, while a peripheral stalk is formed by the delta and b chains.

The protein localises to the cell inner membrane. The catalysed reaction is ATP + H2O + 4 H(+)(in) = ADP + phosphate + 5 H(+)(out). In terms of biological role, produces ATP from ADP in the presence of a proton gradient across the membrane. The catalytic sites are hosted primarily by the beta subunits. The protein is ATP synthase subunit beta of Brucella anthropi (strain ATCC 49188 / DSM 6882 / CCUG 24695 / JCM 21032 / LMG 3331 / NBRC 15819 / NCTC 12168 / Alc 37) (Ochrobactrum anthropi).